A 124-amino-acid polypeptide reads, in one-letter code: U33-theraphotoxin-Cg1c (124 aa).

An N-terminal signal peptide occupies residues 1 to 17; that stretch reads MKFAVAIAFTLLVCVFA. 5 disulfides stabilise this stretch: cysteine 26-cysteine 37, cysteine 31-cysteine 51, cysteine 36-cysteine 75, cysteine 61-cysteine 83, and cysteine 77-cysteine 94. The segment covering 93–108 has biased composition (basic and acidic residues); that stretch reads RCQEESGKSDKSKESQ. Positions 93-124 are disordered; it reads RCQEESGKSDKSKESQGSDESEESEESKESSG. A compositionally biased stretch (acidic residues) spans 109–118; sequence GSDESEESEE.

Belongs to the neurotoxin 32 family. In terms of tissue distribution, expressed by the venom gland.

The protein localises to the secreted. This is U33-theraphotoxin-Cg1c from Chilobrachys guangxiensis (Chinese earth tiger tarantula).